A 229-amino-acid polypeptide reads, in one-letter code: tRNA (guanine-N(7)-)-methyltransferase (229 aa).

Residues Glu59, Glu84, Asp111, and Asp134 each contribute to the S-adenosyl-L-methionine site. Asp134 is an active-site residue. Lys138 serves as a coordination point for substrate. Residues 140 to 145 (KHNKRR) form an interaction with RNA region. Substrate is bound by residues Asp170 and 207 to 210 (TKFE).

This sequence belongs to the class I-like SAM-binding methyltransferase superfamily. TrmB family.

The catalysed reaction is guanosine(46) in tRNA + S-adenosyl-L-methionine = N(7)-methylguanosine(46) in tRNA + S-adenosyl-L-homocysteine. It functions in the pathway tRNA modification; N(7)-methylguanine-tRNA biosynthesis. In terms of biological role, catalyzes the formation of N(7)-methylguanine at position 46 (m7G46) in tRNA. In Saccharophagus degradans (strain 2-40 / ATCC 43961 / DSM 17024), this protein is tRNA (guanine-N(7)-)-methyltransferase.